Consider the following 787-residue polypeptide: Phenylalanine--tRNA ligase beta subunit (787 aa).

Residues 39–149 (APAFAGVVIA…EDAPVGTNIR (111 aa)) form the tRNA-binding domain. The B5 domain maps to 400-475 (PEAKQVGLRL…RVYGYENIPD (76 aa)). Residues Asp-453, Asp-459, Glu-462, and Glu-463 each coordinate Mg(2+). In terms of domain architecture, FDX-ACB spans 694-786 (SKFQPVRRDL…AATAAGARLR (93 aa)).

It belongs to the phenylalanyl-tRNA synthetase beta subunit family. Type 1 subfamily. Tetramer of two alpha and two beta subunits. Requires Mg(2+) as cofactor.

The protein localises to the cytoplasm. It catalyses the reaction tRNA(Phe) + L-phenylalanine + ATP = L-phenylalanyl-tRNA(Phe) + AMP + diphosphate + H(+). The protein is Phenylalanine--tRNA ligase beta subunit (pheT) of Neisseria meningitidis serogroup B (strain ATCC BAA-335 / MC58).